We begin with the raw amino-acid sequence, 439 residues long: Synaptotagmin-B (439 aa).

Residues 1–74 (MQAEMNQSAE…KEKFMNELQK (74 aa)) lie on the Vesicular side of the membrane. N-linked (GlcNAc...) asparagine glycosylation is found at asparagine 6 and asparagine 46. A helical membrane pass occupies residues 75–101 (IPLPPWALIAIAIVSGLLLLTCCLCIC). The Cytoplasmic segment spans residues 102–439 (KKCCCKKKKN…EVDVALGLKK (338 aa)). The disordered stretch occupies residues 113–155 (KEKGKGKKNDINMKDVKGSGGNQDDDDAETGLTEGEDKEEEAK). Residues 119–129 (KKNDINMKDVK) are compositionally biased toward basic and acidic residues. Acidic residues predominate over residues 135–151 (QDDDDAETGLTEGEDKE). The tract at residues 153–399 (EAKEEEKLGK…AIGKIFVGSN (247 aa)) is phospholipid binding. C2 domains follow at residues 159 to 278 (KLGK…EEWR) and 290 to 423 (KLGD…AQWH). Residues leucine 189, aspartate 190, aspartate 196, aspartate 248, phenylalanine 249, aspartate 250, serine 253, lysine 254, aspartate 256, aspartate 321, aspartate 327, aspartate 381, aspartate 383, and aspartate 389 each coordinate Ca(2+).

It belongs to the synaptotagmin family. As to quaternary structure, homodimer or homotrimer (possible). Ca(2+) serves as cofactor. Spinal cord, brainstem, midbrain and electric organ.

Its subcellular location is the cytoplasmic vesicle. The protein resides in the secretory vesicle. It localises to the synaptic vesicle membrane. It is found in the synapse. May have a regulatory role in the membrane interactions during trafficking of synaptic vesicles at the active zone of the synapse. It binds acidic phospholipids with a specificity that requires the presence of both an acidic head group and a diacyl backbone. The chain is Synaptotagmin-B (P65-B) from Diplobatis ommata (Ocellated electric ray).